We begin with the raw amino-acid sequence, 361 residues long: Mannose-1-phosphate guanyltransferase (361 aa).

Belongs to the transferase hexapeptide repeat family.

It localises to the cytoplasm. It catalyses the reaction alpha-D-mannose 1-phosphate + GTP + H(+) = GDP-alpha-D-mannose + diphosphate. It functions in the pathway nucleotide-sugar biosynthesis; GDP-alpha-D-mannose biosynthesis; GDP-alpha-D-mannose from alpha-D-mannose 1-phosphate (GTP route): step 1/1. In terms of biological role, involved in cell wall synthesis where it is required for glycosylation. Involved in cell cycle progression through cell-size checkpoint. The polypeptide is Mannose-1-phosphate guanyltransferase (MPG1) (Eremothecium gossypii (strain ATCC 10895 / CBS 109.51 / FGSC 9923 / NRRL Y-1056) (Yeast)).